The sequence spans 159 residues: MLSVEILHEEIEPIDENLQNLLVRCLEAAAKLEEVQGEVVVTLVNNERIHELNRDYRGVDRPTDVLSFAMNEPGEGEMEIFIDEDEASEFPNMLGDIIISVPKAHEQAEDYGHSFERELGFLTVHGFLHLLGYDHGTPEEEKEMFSRQEKVLEEIGLTR.

The Zn(2+) site is built by H125, H129, and H135.

Belongs to the endoribonuclease YbeY family. The cofactor is Zn(2+).

Its subcellular location is the cytoplasm. In terms of biological role, single strand-specific metallo-endoribonuclease involved in late-stage 70S ribosome quality control and in maturation of the 3' terminus of the 16S rRNA. This is Endoribonuclease YbeY from Brevibacillus brevis (strain 47 / JCM 6285 / NBRC 100599).